A 334-amino-acid polypeptide reads, in one-letter code: MEPGPTAAQRRCSLPPWLPLGLLLWSGLALGALPFGSSPHRVFHDLLSEQQLLEVEDLSLSLLQGGGLGPLSLPPDLPDLDPECRELLLDFANSSAELTGCLVRSARPVRLCQTCYPLFQQVVSKMDNISRAAGNTSESQSCARSLLMADRMQIVVILSEFFNTTWQEANCANCLTNNSEELSNSTVYFLNLFNHTLTCFEHNLQGNAHSLLQTKNYSEVCKNCREAYKTLSSLYSEMQKMNELENKAEPGTHLCIDVEDAMNITRKLWSRTFNCSVPCSDTVPVIAVSVFILFLPVVFYLSSFLHSEQKKRKLILPKRLKSSTSFANIQENSN.

A signal peptide spans 1 to 31; sequence MEPGPTAAQRRCSLPPWLPLGLLLWSGLALG. At 32 to 284 the chain is on the lumenal side; it reads ALPFGSSPHR…CSVPCSDTVP (253 aa). 10 N-linked (GlcNAc...) asparagine glycosylation sites follow: asparagine 93, asparagine 128, asparagine 135, asparagine 163, asparagine 177, asparagine 184, asparagine 194, asparagine 216, asparagine 263, and asparagine 274. A helical membrane pass occupies residues 285–305; it reads VIAVSVFILFLPVVFYLSSFL. Residues 306 to 334 are Cytoplasmic-facing; the sequence is HSEQKKRKLILPKRLKSSTSFANIQENSN. Phosphoserine occurs at positions 322, 325, and 333.

It belongs to the OSTM1 family. In terms of assembly, chloride channel 7 are heteromers of alpha (CLCN7) and beta (OSTM1) subunits. Undergoes proteolytic cleavage in the luminal domain, the cleaved fragments might be linked by disulfide bonds with the remnant of the protein. Post-translationally, highly N-glycosylated.

It localises to the lysosome membrane. In terms of biological role, required for osteoclast and melanocyte maturation and function. This Homo sapiens (Human) protein is Osteopetrosis-associated transmembrane protein 1 (OSTM1).